We begin with the raw amino-acid sequence, 1170 residues long: DNA-directed RNA polymerase subunit beta (1170 aa).

This sequence belongs to the RNA polymerase beta chain family. As to quaternary structure, the RNAP catalytic core consists of 2 alpha, 1 beta, 1 beta' and 1 omega subunit. When a sigma factor is associated with the core the holoenzyme is formed, which can initiate transcription.

The catalysed reaction is RNA(n) + a ribonucleoside 5'-triphosphate = RNA(n+1) + diphosphate. Functionally, DNA-dependent RNA polymerase catalyzes the transcription of DNA into RNA using the four ribonucleoside triphosphates as substrates. The chain is DNA-directed RNA polymerase subunit beta from Corynebacterium urealyticum (strain ATCC 43042 / DSM 7109).